Here is a 943-residue protein sequence, read N- to C-terminus: Isoleucine--tRNA ligase (943 aa).

The 'HIGH' region motif lies at 58–68; the sequence is PYANGSIHIGH. Position 567 (Glu567) interacts with L-isoleucyl-5'-AMP. Residues 608-612 carry the 'KMSKS' region motif; the sequence is KMSKS. Lys611 lines the ATP pocket. Positions 906, 909, 926, and 929 each coordinate Zn(2+).

The protein belongs to the class-I aminoacyl-tRNA synthetase family. IleS type 1 subfamily. As to quaternary structure, monomer. Zn(2+) serves as cofactor.

It localises to the cytoplasm. It catalyses the reaction tRNA(Ile) + L-isoleucine + ATP = L-isoleucyl-tRNA(Ile) + AMP + diphosphate. Its function is as follows. Catalyzes the attachment of isoleucine to tRNA(Ile). As IleRS can inadvertently accommodate and process structurally similar amino acids such as valine, to avoid such errors it has two additional distinct tRNA(Ile)-dependent editing activities. One activity is designated as 'pretransfer' editing and involves the hydrolysis of activated Val-AMP. The other activity is designated 'posttransfer' editing and involves deacylation of mischarged Val-tRNA(Ile). This Ectopseudomonas mendocina (strain ymp) (Pseudomonas mendocina) protein is Isoleucine--tRNA ligase.